A 377-amino-acid polypeptide reads, in one-letter code: 23S rRNA (uracil(747)-C(5))-methyltransferase RlmC (377 aa).

4 residues coordinate [4Fe-4S] cluster: C3, C11, C14, and C87. Residues Q212, F241, E262, and N307 each coordinate S-adenosyl-L-methionine. C334 functions as the Nucleophile in the catalytic mechanism.

Belongs to the class I-like SAM-binding methyltransferase superfamily. RNA M5U methyltransferase family. RlmC subfamily.

The catalysed reaction is uridine(747) in 23S rRNA + S-adenosyl-L-methionine = 5-methyluridine(747) in 23S rRNA + S-adenosyl-L-homocysteine + H(+). Catalyzes the formation of 5-methyl-uridine at position 747 (m5U747) in 23S rRNA. The sequence is that of 23S rRNA (uracil(747)-C(5))-methyltransferase RlmC from Xenorhabdus bovienii (strain SS-2004) (Xenorhabdus nematophila subsp. bovienii).